A 158-amino-acid polypeptide reads, in one-letter code: Cyclic pyranopterin monophosphate synthase (158 aa).

Residues 74 to 76 (MCH) and 112 to 113 (ME) each bind substrate. D127 is an active-site residue.

This sequence belongs to the MoaC family. As to quaternary structure, homohexamer; trimer of dimers.

The enzyme catalyses (8S)-3',8-cyclo-7,8-dihydroguanosine 5'-triphosphate = cyclic pyranopterin phosphate + diphosphate. The protein operates within cofactor biosynthesis; molybdopterin biosynthesis. Functionally, catalyzes the conversion of (8S)-3',8-cyclo-7,8-dihydroguanosine 5'-triphosphate to cyclic pyranopterin monophosphate (cPMP). The polypeptide is Cyclic pyranopterin monophosphate synthase (Helicobacter pylori (strain ATCC 700392 / 26695) (Campylobacter pylori)).